Here is a 671-residue protein sequence, read N- to C-terminus: MNSSKITPQRLALSIVCSLAAGFCAASLYATFRHGFNGEAMMTFSVFAFWYETPLYIGHATPVFFCGLSIIIATSVVVLLSQLIISLRNREHHGTARWAAFGEMRHAGYLQRYNRIKGPVFGKTCGPLWFGNYLTNGEQPHSLVVAPTRAGKGVGVVIPTLLTFKGTVIALDVKGELFELTSRARKSSGDAVFKFSPLDPERRTHCYNPVLDIAALPPERQFTETRRLAANLITAKGKGAEGFIDGARDLFVAGILTCIERGTPTIGAVYDLFAQPGEKYKLFAHLAEESRNKEAQRIFDNMAGNDTKILTSYTSVLGDGGLNLWADPLVKAATSRSDFSVYDLRRKRTCVYLCVSPNDLEVVAPLMRLLFQQVVSILQRSLPGKDERYEVLFLLDEFKHLGKLEAIETAITTIAGYKGRFMFIIQSLSALSGTYDEAGKQNFLSNTGVQVFMATADDETPTYISKAIGEYTFQARSTSYSQARMFDHNIQISDQGAPLLRPEQVRLLDDKSEIVLIKGQPPLKLRKVRYYSDRMLRRLFECQIGALPEPASLMLAQDVHQDGQDHLSQQAAVTAALGLGDIDSLVNNGETPTQQNSDMNDEQDNLAIGIYAPQVSVEIDDVVEDANARGVAPVSSVPAEMAPALSAQQQLLGQIIALQQRYRPVSSNPIE.

Transmembrane regions (helical) follow at residues 12–32 (ALSI…YATF), 60–80 (ATPV…VVLL), and 153–173 (GVGV…ALDV).

This sequence belongs to the VirD4/TraG family.

It is found in the cell membrane. The protein is Protein VirD4 (virD4) of Rhizobium rhizogenes (Agrobacterium rhizogenes).